Here is a 489-residue protein sequence, read N- to C-terminus: Dipeptide and tripeptide permease B (489 aa).

The Cytoplasmic portion of the chain corresponds to 1–27 (MNTTTPMGMLQQPRPFFMIFFVELWER). The chain crosses the membrane as a helical span at residues 28 to 48 (FGYYGVQGVLAVFFVKQLGFS). At 49–52 (QEQA) the chain is on the periplasmic side. The chain crosses the membrane as a helical span at residues 53–73 (FVTFGAFAALVYGLISIGGYV). Residues 74-82 (GDHLLGTKR) are Cytoplasmic-facing. A helical transmembrane segment spans residues 83 to 103 (TIVLGALVLAIGYFMTGLSLL). The Periplasmic portion of the chain corresponds to 104–106 (KPD). The helical transmembrane segment at 107–127 (LIFIALGTIAVGNGLFKANPA) threads the bilayer. Residues 128–146 (SLLSKCYPPKAPRLDGAFT) are Cytoplasmic-facing. Residues 147-167 (LFYMSINIGSLIALSLAPVIA) form a helical membrane-spanning segment. Over 168-172 (DRFGY) the chain is Periplasmic. A helical membrane pass occupies residues 173 to 193 (SVTYNLCGAGLIIALLVYIAC). At 194 to 210 (RGMVKDIGSEPDFRPMS) the chain is on the cytoplasmic side. Residues 211-231 (FSKLLYVLLGSVVMIFVCAWL) form a helical membrane-spanning segment. Residues 232 to 233 (MH) are Periplasmic-facing. A helical membrane pass occupies residues 234–254 (NVEVANLVLIVLSIVVTIIFF). The Cytoplasmic segment spans residues 255-267 (RQAFKLDKTGRNK). The helical transmembrane segment at 268–288 (MFVAFVLMLEAVVFYILYAQM) threads the bilayer. Residues 289–311 (PTSLNFFAINNVHHEILGFSINP) lie on the Periplasmic side of the membrane. The chain crosses the membrane as a helical span at residues 312–332 (VSFQALNPFWVVLASPILAGI). At 333-350 (YTHLGSKGKDLSMPMKFT) the chain is on the cytoplasmic side. The helical transmembrane segment at 351 to 371 (LGMFMCSLGFLTAAAAGMWFA) threads the bilayer. Residues 372 to 380 (DAQGLTSPW) are Periplasmic-facing. A helical transmembrane segment spans residues 381-401 (FIVLVYLFQSLGELFISALGL). The Cytoplasmic portion of the chain corresponds to 402 to 411 (AMVAALVPQH). A helical transmembrane segment spans residues 412–432 (LMGFILGISFLTQAAAFLLGG). Topologically, residues 433–456 (YVATFTAVPDNITDPLETLPVYTN) are periplasmic. The chain crosses the membrane as a helical span at residues 457–477 (VFGKIGLVTLGVAVVMLLMVP). Residues 478–489 (WLKRMIAAPESH) are Cytoplasmic-facing.

This sequence belongs to the major facilitator superfamily. Proton-dependent oligopeptide transporter (POT/PTR) (TC 2.A.17) family. DtpB subfamily.

It localises to the cell inner membrane. Functionally, proton-dependent permease that transports di- and tripeptides. The chain is Dipeptide and tripeptide permease B from Shigella dysenteriae serotype 1 (strain Sd197).